A 131-amino-acid polypeptide reads, in one-letter code: Large ribosomal subunit protein uL14m (131 aa).

It belongs to the universal ribosomal protein uL14 family. Component of the mitochondrial large ribosomal subunit (mt-LSU). Mature N.crassa 74S mitochondrial ribosomes consist of a small (37S) and a large (54S) subunit. The 37S small subunit contains a 16S ribosomal RNA (16S mt-rRNA) and 32 different proteins. The 54S large subunit contains a 23S rRNA (23S mt-rRNA) and 42 different proteins.

It is found in the mitochondrion. Component of the mitochondrial ribosome (mitoribosome), a dedicated translation machinery responsible for the synthesis of mitochondrial genome-encoded proteins, including at least some of the essential transmembrane subunits of the mitochondrial respiratory chain. The mitoribosomes are attached to the mitochondrial inner membrane and translation products are cotranslationally integrated into the membrane. The sequence is that of Large ribosomal subunit protein uL14m (mrpl38) from Neurospora crassa (strain ATCC 24698 / 74-OR23-1A / CBS 708.71 / DSM 1257 / FGSC 987).